A 464-amino-acid polypeptide reads, in one-letter code: Soluble pyridine nucleotide transhydrogenase (464 aa).

Residue 35–44 participates in FAD binding; sequence DSRRQVGGNC.

This sequence belongs to the class-I pyridine nucleotide-disulfide oxidoreductase family. FAD is required as a cofactor.

It is found in the cytoplasm. It carries out the reaction NAD(+) + NADPH = NADH + NADP(+). Conversion of NADPH, generated by peripheral catabolic pathways, to NADH, which can enter the respiratory chain for energy generation. This is Soluble pyridine nucleotide transhydrogenase from Pseudomonas fluorescens (strain ATCC BAA-477 / NRRL B-23932 / Pf-5).